Reading from the N-terminus, the 304-residue chain is Mycothiol acetyltransferase (304 aa).

N-acetyltransferase domains follow at residues 16–155 (AHVE…RTGL) and 164–304 (VALS…YRRA). E46 contacts 1D-myo-inositol 2-(L-cysteinylamino)-2-deoxy-alpha-D-glucopyranoside. 87–89 (LVV) serves as a coordination point for acetyl-CoA. Residues E190, K230, and E237 each contribute to the 1D-myo-inositol 2-(L-cysteinylamino)-2-deoxy-alpha-D-glucopyranoside site. Acetyl-CoA contacts are provided by residues 241–243 (LGV) and 248–254 (AARGLGS). 1D-myo-inositol 2-(L-cysteinylamino)-2-deoxy-alpha-D-glucopyranoside is bound at residue Y275.

The protein belongs to the acetyltransferase family. MshD subfamily. Monomer.

The catalysed reaction is 1D-myo-inositol 2-(L-cysteinylamino)-2-deoxy-alpha-D-glucopyranoside + acetyl-CoA = mycothiol + CoA + H(+). Its function is as follows. Catalyzes the transfer of acetyl from acetyl-CoA to desacetylmycothiol (Cys-GlcN-Ins) to form mycothiol. The chain is Mycothiol acetyltransferase from Clavibacter sepedonicus (Clavibacter michiganensis subsp. sepedonicus).